We begin with the raw amino-acid sequence, 161 residues long: Epoxidase gkaX (161 aa).

Residues Met1 to Ser18 form the signal peptide. Asn45 carries an N-linked (GlcNAc...) asparagine glycan. The next 3 membrane-spanning stretches (helical) occupy residues Trp59 to Val79, Ile92 to Leu112, and Trp139 to Ser159.

Belongs to the epoxidase xenD family.

It localises to the membrane. It participates in mycotoxin biosynthesis. Its function is as follows. Epoxidase; part of the gene cluster that mediates the biosynthesis of GKK1032, fungal natural products containing a macrocyclic para-cyclophane connected to a decahydrofluorene ring system that show potent antitumor activities. Within the pathway, gkaX functions synergistically with gkaB and gkaZ to form the cyclophane. The pathway begins with the PKS-NRPS gkaA which, with the help of the trans-enoyl reductase gkaC, synthesizes the polyketide-tyrosyl acyl thioester product which can be reductively off-loaded by the terminal reductase (R) domain in gkaA. The alpha/beta hydrolase gkaG is then required to catalyze the subsequent Knoevenagel condensation that affords the 3-pyrrolin-2-one ring, whereas the three proteins gkaB, gkaX and gkaZ then function synergistically to form the cyclophane. The chain is Epoxidase gkaX from Penicillium citrinum.